Reading from the N-terminus, the 716-residue chain is Cyclic nucleotide-gated ion channel 1 (716 aa).

Residues 1 to 97 (MNFRQEKFVR…QGPFLQRWNK (97 aa)) are Cytoplasmic-facing. Residues 98–118 (IFVLACIIAVSLDPLFFYVPI) traverse the membrane as a helical segment. The Extracellular portion of the chain corresponds to 119–132 (IDDAKKCLGIDKKM). A helical transmembrane segment spans residues 133-153 (EITASVLRSFTDVFYVLHIIF). The Cytoplasmic segment spans residues 154–187 (QFRTGFIAPSSRVFGRGVLVEDKREIAKRYLSSH). A helical membrane pass occupies residues 188–208 (FIIDILAVLPLPQMVILIIIP). At 209 to 220 (HMRGSSSLNTKN) the chain is on the extracellular side. The chain crosses the membrane as a helical span at residues 221-241 (MLKFIVFFQYIPRFIRIYPLY). The Cytoplasmic segment spans residues 242–259 (KEVTRTSGILTETAWAGA). A helical membrane pass occupies residues 260 to 280 (AFNLFLYMLASHVFGAFWYLF). Residues 281–379 (SIERETVCWK…GQNLKTSTYI (99 aa)) lie on the Extracellular side of the membrane. The chain crosses the membrane as a helical span at residues 380–400 (WEICFAVFISIAGLVLFSFLI). Topologically, residues 401-716 (GNMQTYLQST…PAEPDFNSDD (316 aa)) are cytoplasmic. A nucleoside 3',5'-cyclic phosphate is bound by residues 486-610 (MFEK…SKQL) and glutamate 557. The tract at residues 602–617 (FRRLHSKQLRHTFRYY) is calmodulin-binding. One can recognise an IQ domain in the interval 622 to 651 (KTWAACFIQAAWRRYIKKKLEESLKEEENR). The interval 689 to 716 (SVRKPRMPERMPPMLLQKPAEPDFNSDD) is disordered.

It belongs to the cyclic nucleotide-gated cation channel (TC 1.A.1.5) family. In terms of assembly, homotetramer or heterotetramer (Potential). Binds calmodulin-2/3/5 with a higher affinity than calmodulin-1/4. Expressed in the whole plant but only weakly in roots.

It localises to the cell membrane. Functionally, acts as a cyclic nucleotide-gated ion channel. Can be activated by cyclic AMP which leads to an opening of the cation channel. May be responsible for cAMP-induced calcium entry in cells and thus should be involved in the calcium signal transduction. Could transport K(+), Na(+) and Pb(2+). This is Cyclic nucleotide-gated ion channel 1 (CNGC1) from Arabidopsis thaliana (Mouse-ear cress).